Consider the following 348-residue polypeptide: Alternative squalene epoxidase (348 aa).

Over residues 1–10 (MLVDRVENNE) the composition is skewed to basic and acidic residues. The disordered stretch occupies residues 1–26 (MLVDRVENNEKQQQQMASSSDAMSDS). Residues 12–26 (QQQQMASSSDAMSDS) show a composition bias toward low complexity. 3 consecutive transmembrane segments (helical) span residues 55–75 (AIAW…LLLS), 105–125 (LGLV…WIFF), and 153–173 (GLLT…YLAI). In terms of domain architecture, Fatty acid hydroxylase spans 197 to 332 (FMCLVLQDGI…FMWFDQLGGT (136 aa)). The Histidine box-1 motif lies at 211 to 215 (HVLEH). A Histidine box-2 motif is present at residues 226–230 (HKPHH). Helical transmembrane passes span 243–263 (GSLM…ANLV) and 277–297 (SYAC…DGIF). Positions 308–312 (HHVHH) match the Histidine box-3 motif.

Belongs to the sterol desaturase family. As to quaternary structure, interacts with cytochrome b5/PHATRDRAFT_30770. The cofactor is Fe cation.

The protein resides in the endoplasmic reticulum membrane. The enzyme catalyses squalene + 2 Fe(II)-[cytochrome b5] + O2 + 2 H(+) = (S)-2,3-epoxysqualene + 2 Fe(III)-[cytochrome b5] + H2O. Its pathway is terpene metabolism; lanosterol biosynthesis; lanosterol from farnesyl diphosphate. The activity of this enzyme is not inhibited by terbinafine, an established inhibitor of the conventional flavoprotein squalene epoxidase. Its function is as follows. Catalyzes the stereospecific epoxidation of squalene at the terminal double bond to form (S)-2,3-epoxysqualene, the first oxygenation step in sterol biosynthesis. This chain is Alternative squalene epoxidase, found in Phaeodactylum tricornutum (strain CCAP 1055/1).